Here is a 432-residue protein sequence, read N- to C-terminus: GTPase Obg (432 aa).

In terms of domain architecture, Obg spans 1-158; sequence MFVDQIKIEV…RKLKLELKVL (158 aa). Positions 159-335 constitute an OBG-type G domain; it reads ADVGLVGFPS…LTHRTADVLE (177 aa). GTP is bound by residues 165–172, 190–194, 212–215, 282–285, and 316–318; these read GFPSVGKS, FTTLV, DLPG, SKMD, and SSL. The Mg(2+) site is built by Ser172 and Thr192. An OCT domain is found at 354–432; sequence TFKEDEPAFK…IEDFTFEFVE (79 aa).

This sequence belongs to the TRAFAC class OBG-HflX-like GTPase superfamily. OBG GTPase family. As to quaternary structure, monomer. Mg(2+) is required as a cofactor.

The protein resides in the cytoplasm. In terms of biological role, an essential GTPase which binds GTP, GDP and possibly (p)ppGpp with moderate affinity, with high nucleotide exchange rates and a fairly low GTP hydrolysis rate. Plays a role in control of the cell cycle, stress response, ribosome biogenesis and in those bacteria that undergo differentiation, in morphogenesis control. This Ligilactobacillus salivarius (strain UCC118) (Lactobacillus salivarius) protein is GTPase Obg.